A 237-amino-acid polypeptide reads, in one-letter code: Proteasome subunit beta type-1 (237 aa).

It belongs to the peptidase T1B family. In terms of assembly, the 26S proteasome consists of a 20S proteasome core and two 19S regulatory subunits. The 20S proteasome core is a barrel-shaped complex made of 28 subunits that are arranged in four stacked rings. The two outer rings are each formed by seven alpha subunits, and the two inner rings are formed by seven beta subunits. The proteolytic activity is exerted by three beta-subunits psmb5, psmb6 and psmb7.

Its subcellular location is the cytoplasm. The protein resides in the nucleus. Functionally, non-catalytic component of the 20S core proteasome complex involved in the proteolytic degradation of most intracellular proteins. This complex plays numerous essential roles within the cell by associating with different regulatory particles. Associated with two 19S regulatory particles, forms the 26S proteasome and thus participates in the ATP-dependent degradation of ubiquitinated proteins. The 26S proteasome plays a key role in the maintenance of protein homeostasis by removing misfolded or damaged proteins that could impair cellular functions, and by removing proteins whose functions are no longer required. Associated with the PA200 or PA28, the 20S proteasome mediates ubiquitin-independent protein degradation. This Danio rerio (Zebrafish) protein is Proteasome subunit beta type-1.